The primary structure comprises 338 residues: Lipoate-protein ligase A (338 aa).

One can recognise a BPL/LPL catalytic domain in the interval 29–216 (PATQRVLFLW…AFFAHYGERI (188 aa)). Residues R71, 76 to 79 (GAVF), and K134 each bind ATP. A (R)-lipoate-binding site is contributed by K134.

Belongs to the LplA family. Monomer.

Its subcellular location is the cytoplasm. The catalysed reaction is L-lysyl-[lipoyl-carrier protein] + (R)-lipoate + ATP = N(6)-[(R)-lipoyl]-L-lysyl-[lipoyl-carrier protein] + AMP + diphosphate + H(+). It functions in the pathway protein modification; protein lipoylation via exogenous pathway; protein N(6)-(lipoyl)lysine from lipoate: step 1/2. The protein operates within protein modification; protein lipoylation via exogenous pathway; protein N(6)-(lipoyl)lysine from lipoate: step 2/2. Functionally, catalyzes both the ATP-dependent activation of exogenously supplied lipoate to lipoyl-AMP and the transfer of the activated lipoyl onto the lipoyl domains of lipoate-dependent enzymes. The protein is Lipoate-protein ligase A of Salmonella typhi.